Reading from the N-terminus, the 678-residue chain is Translation factor GUF1 homolog, chloroplastic (678 aa).

The transit peptide at 1–43 (MASILLSLNTHTLLPLHTRTRTTKTTLKILRFSHKLPPSSPFY) directs the protein to the chloroplast. The 182-residue stretch at 81–262 (KNIRNFCIIA…AIVERVPPPR (182 aa)) folds into the tr-type G domain. Residues 90–97 (AHIDHGKS), 155–159 (DTPGH), and 209–212 (NKID) contribute to the GTP site.

Belongs to the TRAFAC class translation factor GTPase superfamily. Classic translation factor GTPase family. LepA subfamily.

It localises to the plastid. It is found in the chloroplast. The catalysed reaction is GTP + H2O = GDP + phosphate + H(+). Its function is as follows. Promotes chloroplast protein synthesis. May act as a fidelity factor of the translation reaction, by catalyzing a one-codon backward translocation of tRNAs on improperly translocated ribosomes. This Populus trichocarpa (Western balsam poplar) protein is Translation factor GUF1 homolog, chloroplastic.